Here is a 317-residue protein sequence, read N- to C-terminus: Acetyl-coenzyme A carboxylase carboxyl transferase subunit alpha (317 aa).

In terms of domain architecture, CoA carboxyltransferase C-terminal spans 40–293 (LEKRSADALK…GDIIAASLRS (254 aa)).

This sequence belongs to the AccA family. Acetyl-CoA carboxylase is a heterohexamer composed of biotin carboxyl carrier protein (AccB), biotin carboxylase (AccC) and two subunits each of ACCase subunit alpha (AccA) and ACCase subunit beta (AccD).

It is found in the cytoplasm. The catalysed reaction is N(6)-carboxybiotinyl-L-lysyl-[protein] + acetyl-CoA = N(6)-biotinyl-L-lysyl-[protein] + malonyl-CoA. It participates in lipid metabolism; malonyl-CoA biosynthesis; malonyl-CoA from acetyl-CoA: step 1/1. In terms of biological role, component of the acetyl coenzyme A carboxylase (ACC) complex. First, biotin carboxylase catalyzes the carboxylation of biotin on its carrier protein (BCCP) and then the CO(2) group is transferred by the carboxyltransferase to acetyl-CoA to form malonyl-CoA. The polypeptide is Acetyl-coenzyme A carboxylase carboxyl transferase subunit alpha (Brucella abortus (strain S19)).